Reading from the N-terminus, the 369-residue chain is Glutamate 5-kinase (369 aa).

Lys9 lines the ATP pocket. Positions 49, 136, and 148 each coordinate substrate. Residues 168–169 (TD) and 210–216 (TGGMLTK) each bind ATP. Residues 275–355 (QGSIWVDKGA…KGVLIYRDDW (81 aa)) enclose the PUA domain.

The protein belongs to the glutamate 5-kinase family.

The protein resides in the cytoplasm. It carries out the reaction L-glutamate + ATP = L-glutamyl 5-phosphate + ADP. Its pathway is amino-acid biosynthesis; L-proline biosynthesis; L-glutamate 5-semialdehyde from L-glutamate: step 1/2. Functionally, catalyzes the transfer of a phosphate group to glutamate to form L-glutamate 5-phosphate. The chain is Glutamate 5-kinase from Streptococcus pneumoniae (strain 70585).